The following is a 528-amino-acid chain: Peptide chain release factor 3 (528 aa).

A tr-type G domain is found at 9–280 (RRRRTFAIIS…LKLAPAPAPR (272 aa)). GTP is bound by residues 18–25 (SHPDAGKT), 86–90 (DTPGH), and 140–143 (NKLD).

This sequence belongs to the TRAFAC class translation factor GTPase superfamily. Classic translation factor GTPase family. PrfC subfamily.

The protein localises to the cytoplasm. In terms of biological role, increases the formation of ribosomal termination complexes and stimulates activities of RF-1 and RF-2. It binds guanine nucleotides and has strong preference for UGA stop codons. It may interact directly with the ribosome. The stimulation of RF-1 and RF-2 is significantly reduced by GTP and GDP, but not by GMP. This is Peptide chain release factor 3 from Symbiobacterium thermophilum (strain DSM 24528 / JCM 14929 / IAM 14863 / T).